The following is a 172-amino-acid chain: Acidic proline-rich protein PRP25 (172 aa).

The signal sequence occupies residues 1–16 (MLVVLFTAVLLTLSYA). A disordered region spans residues 22–172 (ELQILDQTPN…QQGPPPPGGP (151 aa)). The span at 32–44 (QKPPPPGFPPRPP) shows a compositional bias: pro residues. Low complexity predominate over residues 57–67 (GPQQSPLQPGK). Pro residues-rich tracts occupy residues 68-137 (PQDP…PQQK) and 145-172 (QGPP…PGGP).

The protein localises to the secreted. The chain is Acidic proline-rich protein PRP25 from Rattus norvegicus (Rat).